The following is a 436-amino-acid chain: Glutamyl-tRNA reductase (436 aa).

Residues 49–52 (TCNR), Ser-109, 114–116 (EGQ), and Gln-120 each bind substrate. Cys-50 (nucleophile) is an active-site residue. 198 to 203 (GAGRMS) provides a ligand contact to NADP(+).

Belongs to the glutamyl-tRNA reductase family. As to quaternary structure, homodimer.

The catalysed reaction is (S)-4-amino-5-oxopentanoate + tRNA(Glu) + NADP(+) = L-glutamyl-tRNA(Glu) + NADPH + H(+). Its pathway is porphyrin-containing compound metabolism; protoporphyrin-IX biosynthesis; 5-aminolevulinate from L-glutamyl-tRNA(Glu): step 1/2. It participates in porphyrin-containing compound metabolism; chlorophyll biosynthesis. Catalyzes the NADPH-dependent reduction of glutamyl-tRNA(Glu) to glutamate 1-semialdehyde (GSA). The chain is Glutamyl-tRNA reductase from Prochlorococcus marinus (strain AS9601).